We begin with the raw amino-acid sequence, 397 residues long: Meiotic driver wtf28 (397 aa).

2 disordered regions span residues 1–41 and 65–102; these read MKNK…GNTL and NWNKSTTPPDYDENRLPITDEGNNPPNTHRENHSSGTA. Residues 11 to 29 show a composition bias toward basic and acidic residues; sequence SMDELSTKNDNEIDLEKGP. Transmembrane regions (helical) follow at residues 108–128, 145–165, 175–195, 205–225, 230–250, 266–286, 290–310, 320–340, and 357–377; these read FLIKLIISFTPIFVLNVPAVC, WVYFGVWCAICLMSFISLWCF, VTVIFLAQCVKVTVIFLAQCV, CIKVTVISLAKCVKVIAVGLY, DLVVTIWLAWVVICFILFGCV, SSISAALFFILLLVCIPIWTL, LFGLFQVLGVQSCVVIVTKGL, ATGYEIEASSLFVIGNFLFFY, and NGIASFLGGIANAFGGIANAI.

It belongs to the WTF family. As to quaternary structure, homomer. Forms protein aggregates. The two isoforms can interact with each other and with themselves. High sequence similarity is required for their interaction.

The protein localises to the spore membrane. Its subcellular location is the vacuole membrane. It is found in the ascus epiplasm. The protein resides in the cytoplasm. It localises to the endoplasmic reticulum membrane. Promotes unequal transmission of alleles from the parental zygote to progeny spores by acting as poison/antidote system where the poison and antidote proteins are produced from the same locus; the poison component is trans-acting and targets all spores within an ascus whereas the antidote component is spore-specific, leading to poisoning of all progeny that do not inherit the allele. In terms of biological role, localizes isoform 2 to the vacuole thereby facilitating its degradation. Its function is as follows. Forms toxic aggregates that disrupt spore maturation. This chain is Meiotic driver wtf28, found in Schizosaccharomyces kambucha (Fission yeast).